The primary structure comprises 557 residues: 2-succinyl-5-enolpyruvyl-6-hydroxy-3-cyclohexene-1-carboxylate synthase (557 aa).

This sequence belongs to the TPP enzyme family. MenD subfamily. As to quaternary structure, homodimer. The cofactor is Mg(2+). Mn(2+) serves as cofactor. It depends on thiamine diphosphate as a cofactor.

It carries out the reaction isochorismate + 2-oxoglutarate + H(+) = 5-enolpyruvoyl-6-hydroxy-2-succinyl-cyclohex-3-ene-1-carboxylate + CO2. Its pathway is quinol/quinone metabolism; 1,4-dihydroxy-2-naphthoate biosynthesis; 1,4-dihydroxy-2-naphthoate from chorismate: step 2/7. It functions in the pathway quinol/quinone metabolism; menaquinone biosynthesis. Functionally, catalyzes the thiamine diphosphate-dependent decarboxylation of 2-oxoglutarate and the subsequent addition of the resulting succinic semialdehyde-thiamine pyrophosphate anion to isochorismate to yield 2-succinyl-5-enolpyruvyl-6-hydroxy-3-cyclohexene-1-carboxylate (SEPHCHC). The chain is 2-succinyl-5-enolpyruvyl-6-hydroxy-3-cyclohexene-1-carboxylate synthase from Staphylococcus aureus (strain bovine RF122 / ET3-1).